The primary structure comprises 448 residues: MSLVDLGKRLLEAARKGQDDEVRTLMANGAPFTTDWLGTSPLHLAAQYGHYSTAEVLLRAGVSRDARTKVDRTPLHMAAADGHAHIVELLVRNGADVNAKDMLKMTALHWATERHHRDVVELLIKYGADVHAFSKFDKSAFDIALEKNNAEILVILQEAMQNQVNVNPERANPVTDPVSMAAPFIFTSGEVVNLASLISSTNTKTTSGDPHASTVQFSNSTTSVLATLAALAEASVPLSNSHRATANTEEIIEGNSVDSSIQQVMGSGGQRVITIVTDGVPLGNIQTSIPTGGIGQPFIVTVQDGQQVLTVPAGKVAEETVIKEEEEEKLPLTKKPRIGEKTNSVEESKEGNERELLQQQLQEANRRAQEYRHQLLKKEQEAEQYRLKLEAIARQQPNGVDFTMVEEVAEVDAVVVTEGELEERETKVTGSAGTTEPHTRVSMATVSS.

5 ANK repeats span residues 5 to 34, 37 to 66, 70 to 99, 103 to 132, and 136 to 166; these read DLGKRLLEAARKGQDDEVRTLMANGAPFTT, LGTSPLHLAAQYGHYSTAEVLLRAGVSRDA, VDRTPLHMAAADGHAHIVELLVRNGADVNA, LKMTALHWATERHHRDVVELLIKYGADVHA, and FDKSAFDIALEKNNAEILVILQEAMQNQVNV. Residue serine 256 is modified to Phosphoserine. Disordered stretches follow at residues 325-354 and 420-448; these read EEEEKLPLTKKPRIGEKTNSVEESKEGNER and ELEERETKVTGSAGTTEPHTRVSMATVSS. Positions 337–354 are enriched in basic and acidic residues; the sequence is RIGEKTNSVEESKEGNER. Residues 345–395 are a coiled coil; sequence VEESKEGNERELLQQQLQEANRRAQEYRHQLLKKEQEAEQYRLKLEAIARQ. Polar residues predominate over residues 428-448; it reads VTGSAGTTEPHTRVSMATVSS.

In terms of assembly, heterotetramer of two alpha and two beta subunits. The C-terminal is necessary for the formation of a heterotetrameric GABP-alpha-2/beta-2 complex, and also facilitates homotypic dimerization. Interacts with ADGRB2.

Its subcellular location is the nucleus. In terms of biological role, may function as transcription factor capable of interacting with purine rich repeats (GA repeats). The sequence is that of GA-binding protein subunit beta-2 (GABPB2) from Homo sapiens (Human).